The sequence spans 633 residues: MA3 DOMAIN-CONTAINING TRANSLATION REGULATORY FACTOR 4 (633 aa).

4 consecutive MI domains span residues 56–177 (DYKR…RAKK), 220–341 (ETKR…ERSD), 351–472 (RFKK…EISN), and 514–633 (DAKD…STDS). Residues 94–101 (VKRLVSMA) carry the Nuclear localization signal 1 motif. The Nuclear localization signal 2 motif lies at 389 to 396 (LKKLITLA).

Belongs to the PDCD4 family. Binds to EIF4A1. The association with ribosomes is modulated by cellular energy status and TOR activity. Mostly expressed, at low levels, in rosette leaves and flower buds, and, to a lower extent, in roots, stems, cauline leaves and flowers.

It is found in the nucleus. Its subcellular location is the cytoplasm. The protein resides in the cytosol. Functionally, involved in target of rapamycin (TOR)-regulated translation control, especially under energy-deficient conditions. This Arabidopsis thaliana (Mouse-ear cress) protein is MA3 DOMAIN-CONTAINING TRANSLATION REGULATORY FACTOR 4.